Reading from the N-terminus, the 420-residue chain is Methylaspartate ammonia-lyase 1 (420 aa).

Residue Q173 participates in (2S,3S)-3-methyl-L-aspartate binding. Mg(2+)-binding residues include D237, E272, and D306. Residue Q328 coordinates (2S,3S)-3-methyl-L-aspartate. The Proton acceptor role is filled by K330. Position 359-360 (359-360) interacts with (2S,3S)-3-methyl-L-aspartate; the sequence is SC.

In terms of assembly, homodimer. It depends on Mg(2+) as a cofactor.

It catalyses the reaction (2S,3S)-3-methyl-L-aspartate = mesaconate + NH4(+). It participates in amino-acid degradation; L-glutamate degradation via mesaconate pathway; acetate and pyruvate from L-glutamate: step 2/4. Functionally, involved in the methylaspartate cycle. Catalyzes the formation of the alpha,beta-unsaturated bond by the reversible anti elimination of ammonia from L-threo-beta-methylaspartate (L-threo-(2S,3S)-3-methylaspartate) to give mesaconate. It can also catalyze the amination of fumarate and ethylfumarate, and the deamination of hydroxylamine, hydrazine, methylamine and ethylamine. This is Methylaspartate ammonia-lyase 1 from Carboxydothermus hydrogenoformans (strain ATCC BAA-161 / DSM 6008 / Z-2901).